Reading from the N-terminus, the 371-residue chain is Macronuclear solute carrier homolog CR-MSC (371 aa).

Solcar repeat units follow at residues 16–111, 120–208, and 215–304; these read RMNY…FYDK, ARPD…CKEN, and PHWI…LSQF. The next 6 helical transmembrane spans lie at 22 to 42, 89 to 109, 126 to 146, 184 to 204, 221 to 241, and 281 to 301; these read FAAA…LDMV, TFFF…GYFY, VAAG…IDIV, AGAN…IYDW, LWGT…FDMI, and FGSF…ICYL.

This sequence belongs to the mitochondrial carrier (TC 2.A.29) family.

It is found in the membrane. The sequence is that of Macronuclear solute carrier homolog CR-MSC from Oxytricha fallax.